Consider the following 378-residue polypeptide: Metalloendoproteinase 2-MMP (378 aa).

The signal sequence occupies residues M1–A20. Residues W21–R154 constitute a propeptide, activation peptide. N-linked (GlcNAc...) asparagine glycans are attached at residues N25, N35, N46, N79, and N102. Residues P118–V125 carry the Cysteine switch motif. A Zn(2+)-binding site is contributed by C120. N127, N143, and N203 each carry an N-linked (GlcNAc...) asparagine glycan. Residue H280 participates in Zn(2+) binding. E281 is a catalytic residue. The Zn(2+) site is built by H284 and H290. N-linked (GlcNAc...) asparagine glycosylation is present at N330. S349 carries GPI-anchor amidated serine lipidation. Positions A350–P378 are cleaved as a propeptide — removed in mature form.

It belongs to the peptidase M10A family. Matrix metalloproteinases (MMPs) subfamily. Zn(2+) is required as a cofactor. Mostly expressed in roots, and, to a lower extent, in flowers, leaves and stems.

It localises to the cell membrane. With respect to regulation, repressed by acetohydroxamic acid (AHA). Its function is as follows. Matrix metalloproteinases (MMPs) or matrixins may play a role in the degradation and remodeling of the extracellular matrix (ECM) during development or in response to stresses. Required for plant growth, morphogenesis, and development with particular relevance for flowering and senescence. Active on McaPLGLDpaAR-NH(2) (QF24) and myelin basic protein (MBP) and, to some extent, on beta-casein. The polypeptide is Metalloendoproteinase 2-MMP (Arabidopsis thaliana (Mouse-ear cress)).